We begin with the raw amino-acid sequence, 485 residues long: Ras-like GTPase YcjX (485 aa).

Positions 33–40 (GLSGAGKT) match the Walker A motif motif. GTP-binding residues include S35, G36, G38, K39, T40, A41, W110, S113, T114, R115, K355, D357, and H358. 8 residues coordinate GDP: G36, G38, K39, T40, A41, W110, S113, and T114. GDP-binding residues include K355, D357, H358, S395, A396, and I397. I397 contributes to the GTP binding site.

Monomer in solution. Mg(2+) is required as a cofactor.

The catalysed reaction is GTP + H2O = GDP + phosphate + H(+). Alternates between an inactive form bound to GDP and an active form bound to GTP. Likely activated by a guanine nucleotide-exchange factor (GEF). In terms of biological role, binds GTP and GDP. Has intrinsic GTPase activity. Does not hydrolyze ATP. May act as a transducer of stress responses. The chain is Ras-like GTPase YcjX from Shewanella oneidensis (strain ATCC 700550 / JCM 31522 / CIP 106686 / LMG 19005 / NCIMB 14063 / MR-1).